Consider the following 154-residue polypeptide: Putative pre-16S rRNA nuclease (154 aa).

The protein belongs to the YqgF nuclease family.

The protein localises to the cytoplasm. Could be a nuclease involved in processing of the 5'-end of pre-16S rRNA. The polypeptide is Putative pre-16S rRNA nuclease (Pelotomaculum thermopropionicum (strain DSM 13744 / JCM 10971 / SI)).